Reading from the N-terminus, the 452-residue chain is Imidazoleglycerol-phosphate dehydratase (452 aa).

The unknown activity stretch occupies residues 1-233 (MASPVQALLL…VGASVVLTPG (233 aa)). Residues 234–452 (LGELLDLVPA…GVPSTKGVLA (219 aa)) are imidazoleglycerol-phosphate dehydratase.

Belongs to the imidazoleglycerol-phosphate dehydratase family.

It catalyses the reaction D-erythro-1-(imidazol-4-yl)glycerol 3-phosphate = 3-(imidazol-4-yl)-2-oxopropyl phosphate + H2O. The protein operates within amino-acid biosynthesis; L-histidine biosynthesis; L-histidine from 5-phospho-alpha-D-ribose 1-diphosphate: step 6/9. This Phytophthora nicotianae (Potato buckeye rot agent) protein is Imidazoleglycerol-phosphate dehydratase (HIS3).